Here is a 284-residue protein sequence, read N- to C-terminus: Short chain dehydrogenase/reductase AacuD (284 aa).

Val-37 provides a ligand contact to NADP(+). Catalysis depends on proton donor residues Ser-166 and Tyr-180. NADP(+) contacts are provided by Tyr-180, Lys-184, and Thr-215. Lys-184 functions as the Lowers pKa of active site Tyr in the catalytic mechanism.

Belongs to the short-chain dehydrogenases/reductases (SDR) family.

The protein operates within secondary metabolite biosynthesis. In terms of biological role, short chain dehydrogenase/reductase; part of the gene cluster that mediates the biosynthesis of the tetrahydroxanthone dimer secalonic acid D. The pathway begins with the synthesis of atrochrysone thioester by the polyketide synthase AacuL. The atrochrysone carboxyl ACP thioesterase AacuM then breaks the thioester bond and releases the atrochrysone carboxylic acid from AacuL. Atrochrysone carboxylic acid is decarboxylated by the decarboxylase AacuI, and oxidized by the anthrone oxygenase AacuG to yield emodin. Emodin is then reduced to emodin hydroquinone by a yet unidentified oxidoreductase. A-ring reduction by the short chain dehydrogenase AacuN, dehydration by the scytalone dehydratase-like protein AacuK and probable spontaneous re-oxidation, results in overall deoxygenation to chrysophanol. Baeyer-Villiger oxidation by the Baeyer-Villiger monooxygenase (BVMO) AacuH then yields monodictyphenone. Monodictyphenone is transformed into compounds with the tetrahydroxanthone skeleton via methylesterification by the methyltransferase AacuQ, followed by the action of the flavin-dependent monooxygenase AacuC, the isomerase AacuP, and the short chain dehydrogenase/reductase AacuF or AacuD. AacuF and AacuD should accept the same compound as a substrate but perform the ketoreduction with a different stereoselectivity, thus yielding blennolides B and A, respectively. In the final step of the biosynthesis, the cytochrome P450 monooxygenase AacuE accepts blennolide B and/or blennolide A to conduct the dimerization reaction to furnish the tetrahydroxanthone dimers, secalonic acids D, B, and F. In Aspergillus aculeatus (strain ATCC 16872 / CBS 172.66 / WB 5094), this protein is Short chain dehydrogenase/reductase AacuD.